Here is a 305-residue protein sequence, read N- to C-terminus: Ornithine carbamoyltransferase, anabolic (305 aa).

Carbamoyl phosphate-binding positions include 53-56, Gln80, Arg104, and 131-134; these read STRT and HPCQ. L-ornithine contacts are provided by residues Asn162, Asp219, and 223–224; that span reads SM. Carbamoyl phosphate contacts are provided by residues 259–260 and Arg287; that span reads CL.

This sequence belongs to the aspartate/ornithine carbamoyltransferase superfamily. OTCase family. As to quaternary structure, homotrimer.

It is found in the cytoplasm. The enzyme catalyses carbamoyl phosphate + L-ornithine = L-citrulline + phosphate + H(+). It participates in amino-acid biosynthesis; L-arginine biosynthesis; L-arginine from L-ornithine and carbamoyl phosphate: step 1/3. Reversibly catalyzes the transfer of the carbamoyl group from carbamoyl phosphate (CP) to the N(epsilon) atom of ornithine (ORN) to produce L-citrulline, which is a substrate for argininosuccinate synthetase (ArgG) involved in the final step in arginine biosynthesis. The sequence is that of Ornithine carbamoyltransferase, anabolic from Pseudomonas aeruginosa (strain ATCC 15692 / DSM 22644 / CIP 104116 / JCM 14847 / LMG 12228 / 1C / PRS 101 / PAO1).